A 136-amino-acid polypeptide reads, in one-letter code: Pilotin AspS 2 (136 aa).

The first 24 residues, 1-24, serve as a signal peptide directing secretion; sequence MSIKQMPGRVLISLLLSVTGLLSG. A lipid anchor (N-palmitoyl cysteine) is attached at Cys-25. Cys-25 carries the S-diacylglycerol cysteine lipid modification. Residues Cys-94 and Cys-131 are joined by a disulfide bond.

Belongs to the GspS/AspS pilotin family. In terms of assembly, cryo-electron microscopy shows that the complex forms a cylindrical channel with 15 GspD2 subunits, each of which interacts with its surrounding AspS2 (GspS-beta).

It localises to the cell outer membrane. Functionally, part of a type II secretion system (T2SS, formerly general secretion pathway, GSP) for the export of folded proteins across the outer membrane. Required for correct assembly of the type II secretion system-beta (T2SS-beta), for localization of GspD-beta to the cell outer membrane and for export of a labile enterotoxin by T2SS-beta. Each AspS2 binds to 2 GspD2 subunits and may clamp the monomers together, stabilizing structure and accelerating its assembly. This Escherichia coli O78:H11 (strain H10407 / ETEC) protein is Pilotin AspS 2.